An 859-amino-acid chain; its full sequence is Anoctamin-7 (859 aa).

Over 1–297 (MLRGQAREED…YFAWLGFYTG (297 aa)) the chain is Cytoplasmic. The tract at residues 25–50 (GCSYGSTAQASEAGKQQVAPSRVGSS) is disordered. Residues 298–318 (WLLPAAVVGTVVFLVGCFLVF) traverse the membrane as a helical segment. The Extracellular segment spans residues 319–362 (SDIPTQELCHSSDSFDMCPLCSDCSFWLLSSACTLAQAGRLFDH). A helical transmembrane segment spans residues 363–383 (GGTVFFSLFMALWAVLLLEYW). At 384 to 441 (KRKNATLAYRWDCSDYEDIEERPRPQFAATAPMTALNPITGEDEPYFPEKNRVRRMLA) the chain is on the cytoplasmic side. A helical transmembrane segment spans residues 442 to 462 (GSVVLLMMVAVVIMCLVSVIL). Residues 463 to 492 (YRAVMAIIVSRSDNAFLSAWASRIASLTGS) are Extracellular-facing. Residues 493 to 513 (VVNLVFILILSKVYVLLAQVL) traverse the membrane as a helical segment. At 514–530 (TRWEMHRTQTEFEDAFT) the chain is on the cytoplasmic side. The chain crosses the membrane as a helical span at residues 531–551 (LKVFIFQFVNFYASPVYIAFF). Topologically, residues 552-651 (KGRFVGYPGN…FHEYLEMVLQ (100 aa)) are extracellular. Residues 652–672 (FGFVTIFVAACPLAPLFALLN) form a helical membrane-spanning segment. The Cytoplasmic portion of the chain corresponds to 673 to 700 (NWVEIRLDARKFVCEYRRPVAERAQDIG). The helical transmembrane segment at 701–721 (IWFHILTGLTHLAVISNAFLL) threads the bilayer. Over 722–780 (AFSSDFLPRVYYSWTHAPDLHGFLNFTLARAPPTFTSAHNRTCRYRAFRDDDGHYSPTY) the chain is Extracellular. Asparagine 746 and asparagine 761 each carry an N-linked (GlcNAc...) asparagine glycan. A helical membrane pass occupies residues 781 to 801 (WTLLAIRLAFVIVFEHVVFSI). Over 802–859 (GRVLDLLVPDIPESVEIKVKREYYLAKQALAENEALLGATGVKDDQPPSSEPSLGLPA) the chain is Cytoplasmic.

This sequence belongs to the anoctamin family. Highly expressed in the stomach. Expressed at low levels in small intestine and large intestine.

The protein resides in the cell membrane. Its subcellular location is the endoplasmic reticulum. The catalysed reaction is a 1,2-diacyl-sn-glycero-3-phospho-L-serine(in) = a 1,2-diacyl-sn-glycero-3-phospho-L-serine(out). It carries out the reaction a beta-D-galactosyl-(1&lt;-&gt;1')-N-acylsphing-4-enine(out) = a beta-D-galactosyl-(1&lt;-&gt;1')-N-acylsphing-4-enine(in). It catalyses the reaction a 1,2-diacyl-sn-glycero-3-phosphocholine(in) = a 1,2-diacyl-sn-glycero-3-phosphocholine(out). Its function is as follows. Has calcium-dependent phospholipid scramblase activity; scrambles phosphatidylserine, phosphatidylcholine and galactosylceramide. Does not exhibit calcium-activated chloride channel (CaCC) activity. May play a role in cell-cell interactions. This Mus musculus (Mouse) protein is Anoctamin-7 (Ano7).